The primary structure comprises 396 residues: Bifunctional enzyme Fae/Hps (396 aa).

The tract at residues 1–161 (MMLIGEALIG…HEKDRAAHAV (161 aa)) is formaldehyde-activating enzyme. H17 (proton donor) is an active-site residue. Substrate is bound by residues D19, L48, K66, T68, and Q83. Positions 162-396 (MGFKISKLWD…IDQFRIMTDF (235 aa)) are 3-hexulose-6-phosphate synthase.

The protein in the N-terminal section; belongs to the formaldehyde-activating enzyme family. In the C-terminal section; belongs to the HPS/KGPDC family. HPS subfamily.

The catalysed reaction is 5,6,7,8-tetrahydromethanopterin + formaldehyde = 5,10-methylenetetrahydromethanopterin + H2O. It catalyses the reaction D-ribulose 5-phosphate + formaldehyde = D-arabino-hex-3-ulose 6-phosphate. Its pathway is carbohydrate biosynthesis; D-ribose 5-phosphate biosynthesis. Catalyzes the condensation of formaldehyde with tetrahydromethanopterin (H(4)MPT) to 5,10-methylenetetrahydromethanopterin. Its function is as follows. Catalyzes the reversible formation of ribulose-5-phosphate and formaldehyde from 3-hexulose-6-phosphate. This is Bifunctional enzyme Fae/Hps from Methanococcoides burtonii (strain DSM 6242 / NBRC 107633 / OCM 468 / ACE-M).